The primary structure comprises 97 residues: Large ribosomal subunit protein bL28 (97 aa).

This sequence belongs to the bacterial ribosomal protein bL28 family.

The polypeptide is Large ribosomal subunit protein bL28 (Rickettsia africae (strain ESF-5)).